The primary structure comprises 225 residues: Chromosome partition protein MukE (225 aa).

A disordered region spans residues 197-225 (RDGEAMPIENHLQLNDETEESQPDSGEEE). The segment covering 212–225 (DETEESQPDSGEEE) has biased composition (acidic residues).

It belongs to the MukE family. In terms of assembly, interacts, and probably forms a ternary complex, with MukF and MukB. The complex formation is stimulated by calcium or magnesium.

Its subcellular location is the cytoplasm. It is found in the nucleoid. Its function is as follows. Involved in chromosome condensation, segregation and cell cycle progression. May participate in facilitating chromosome segregation by condensation DNA from both sides of a centrally located replisome during cell division. Probably acts via its interaction with MukB and MukF. This Salmonella typhi protein is Chromosome partition protein MukE.